A 41-amino-acid polypeptide reads, in one-letter code: Perlinhibin (41 aa).

Post-translationally, contains four disulfide bonds.

Functionally, binds to calcite crystals in the shell and inhibits further shell growth at the binding site. This Haliotis laevigata (Smooth Australian abalone) protein is Perlinhibin.